The sequence spans 545 residues: Chaperonin GroEL 1 (545 aa).

ATP contacts are provided by residues 30–33 (TLGP), Lys51, 87–91 (DGTTT), Gly415, and Asp495.

Belongs to the chaperonin (HSP60) family. Forms a cylinder of 14 subunits composed of two heptameric rings stacked back-to-back. Interacts with the co-chaperonin GroES.

It is found in the cytoplasm. It carries out the reaction ATP + H2O + a folded polypeptide = ADP + phosphate + an unfolded polypeptide.. In terms of biological role, together with its co-chaperonin GroES, plays an essential role in assisting protein folding. The GroEL-GroES system forms a nano-cage that allows encapsulation of the non-native substrate proteins and provides a physical environment optimized to promote and accelerate protein folding. The protein is Chaperonin GroEL 1 of Sinorhizobium medicae (strain WSM419) (Ensifer medicae).